The following is a 502-amino-acid chain: Glutamate--tRNA ligase (502 aa).

A 'HIGH' region motif is present at residues 9–19; the sequence is PSPTGDPHVGT. Positions 106, 108, 133, and 135 each coordinate Zn(2+). A 'KMSKS' region motif is present at residues 250–254; that stretch reads KLSKR. Lys-253 is an ATP binding site.

The protein belongs to the class-I aminoacyl-tRNA synthetase family. Glutamate--tRNA ligase type 1 subfamily. Monomer. It depends on Zn(2+) as a cofactor.

It localises to the cytoplasm. It catalyses the reaction tRNA(Glu) + L-glutamate + ATP = L-glutamyl-tRNA(Glu) + AMP + diphosphate. Functionally, catalyzes the attachment of glutamate to tRNA(Glu) in a two-step reaction: glutamate is first activated by ATP to form Glu-AMP and then transferred to the acceptor end of tRNA(Glu). The polypeptide is Glutamate--tRNA ligase (Protochlamydia amoebophila (strain UWE25)).